We begin with the raw amino-acid sequence, 562 residues long: Ribonuclease Y (562 aa).

Residues 1–21 (MNMLYFVLALLVGLAGGFFVG) form a helical membrane-spanning segment. Residues 108–129 (AAQDAARERETLSADRQETRRE) form a disordered region. In terms of domain architecture, KH spans 252–312 (SVSVVPIPND…VRREVARHVL (61 aa)). Residues 378-471 (VLKHSVQVAH…VAAADAISAA (94 aa)) form the HD domain.

This sequence belongs to the RNase Y family.

It is found in the cell membrane. Its function is as follows. Endoribonuclease that initiates mRNA decay. This chain is Ribonuclease Y, found in Deinococcus geothermalis (strain DSM 11300 / CIP 105573 / AG-3a).